The chain runs to 521 residues: uncharacterized protein (521 aa).

This is an uncharacterized protein from Magallana gigas (Pacific oyster).